Reading from the N-terminus, the 92-residue chain is Long neurotoxin 1 (92 aa).

An N-terminal signal peptide occupies residues 1–21 (MKILLLTLVVVTIVCLDLAYT). Intrachain disulfides connect cysteine 24-cysteine 41, cysteine 34-cysteine 62, cysteine 47-cysteine 51, cysteine 66-cysteine 77, and cysteine 78-cysteine 83.

This sequence belongs to the three-finger toxin family. Long-chain subfamily. Type II alpha-neurotoxin sub-subfamily. As to expression, expressed by the venom gland.

The protein localises to the secreted. Its function is as follows. Binds with high affinity to muscular (alpha-1/CHRNA1) and neuronal (alpha-7/CHRNA7) nicotinic acetylcholine receptor (nAChR) and inhibits acetylcholine from binding to the receptor, thereby impairing neuromuscular and neuronal transmission. In Hydrophis hardwickii (Hardwick's spine-bellied seasnake), this protein is Long neurotoxin 1.